The sequence spans 279 residues: Protein phosphatase 1 regulatory subunit 3E (279 aa).

A phosphoserine mark is found at serine 16 and serine 33. The tract at residues 28 to 89 (RSQRPSLEEE…RSPDTRKRVR (62 aa)) is disordered. The span at 51–65 (ARSRAHVPGRGRRAR) shows a compositional bias: basic residues. A Phosphoserine modification is found at serine 66. Residues 87 to 90 (RVRF) carry the PP1-binding motif motif. Residues 154 to 259 (AARLQAQRIC…NNGGRDYALL (106 aa)) enclose the CBM21 domain. Residues 176-198 (GSARVLDLAYEKRVSVRWSADGW) are glycogen-binding motif. Residues 248–256 (WDNNGGRDY) form a substrate-binding motif region.

As to expression, expressed in liver and heart, with low levels in skeletal muscle.

Acts as a glycogen-targeting subunit for PP1. PP1 is involved in glycogen metabolism and contributes to the activation of glycogen synthase leading to an increase in glycogen synthesis. In Rattus norvegicus (Rat), this protein is Protein phosphatase 1 regulatory subunit 3E (Ppp1r3e).